The sequence spans 255 residues: 5'-nucleotidase SurE (255 aa).

Positions 7, 8, 38, and 90 each coordinate a divalent metal cation.

Belongs to the SurE nucleotidase family. It depends on a divalent metal cation as a cofactor.

It is found in the cytoplasm. It carries out the reaction a ribonucleoside 5'-phosphate + H2O = a ribonucleoside + phosphate. In terms of biological role, nucleotidase that shows phosphatase activity on nucleoside 5'-monophosphates. In Picrophilus torridus (strain ATCC 700027 / DSM 9790 / JCM 10055 / NBRC 100828 / KAW 2/3), this protein is 5'-nucleotidase SurE.